The chain runs to 273 residues: Multivesicular body subunit 12A (273 aa).

Residues 9–151 (GMPLAGLAWS…GFAIWCRKAK (143 aa)) form the MABP domain. Threonine 130 is modified (phosphothreonine). The segment at 154-186 (RPVPKPRALSRDVRDLSLDSPGQPSKGGFPERT) is disordered. An SH3-binding motif is present at residues 155 to 160 (PVPKPR). Phosphoserine is present on residues serine 163, serine 170, serine 195, and serine 202. The tract at residues 192-273 (SRASTLRRND…AAARLPPSVS (82 aa)) is interaction with TSG101, VPS37B and VPS28. Position 204 is a phosphotyrosine (tyrosine 204). Position 207 is a phosphoserine (serine 207). The UMA domain maps to 215–265 (MDGVPFTLHPRFEGKSCGPLAFSAFADLTIKSLADIEAEYNYGFVVEKTAA).

This sequence belongs to the MVB12 family. In terms of assembly, component of the ESCRT-I complex (endosomal sorting complex required for transport I) which consists of TSG101, VPS28, a VPS37 protein (VPS37A to -D) and MVB12A or MVB12B in a 1:1:1:1 stoichiometry. Interacts with CD2AP and CIN85/SH3KBP1. Interacts with CD2AP (via one of the SH3 domains). Interacts with TSG101; the association appears to be mediated by the TSG101-VPS37 binary subcomplex. Interacts with VPS28. Interacts with VPS37B; the association appears to be mediated by the TSG101-VPS37 binary subcomplex. Interacts with VPS37C; the association appears to be mediated by the TSG101-VPS37 binary subcomplex. Interacts with VPS37D; the association appears to be mediated by the TSG101-VPS37 binary subcomplex. Interacts with CEP55. Post-translationally, phosphorylated on Tyr-204 upon EGF stimulation. Phosphorylation is required for interaction with CD2AP and CIN85/SH3KBP1.

It localises to the cytoplasm. The protein resides in the cytoskeleton. The protein localises to the nucleus. Its subcellular location is the endosome. It is found in the microtubule organizing center. It localises to the centrosome. The protein resides in the late endosome membrane. Functionally, component of the ESCRT-I complex, a regulator of vesicular trafficking process. Required for the sorting of endocytic ubiquitinated cargos into multivesicular bodies. May be involved in the ligand-mediated internalization and down-regulation of EGF receptor. In Bos taurus (Bovine), this protein is Multivesicular body subunit 12A (MVB12A).